The chain runs to 216 residues: Probable transaldolase (216 aa).

Residue Lys-85 is the Schiff-base intermediate with substrate of the active site.

This sequence belongs to the transaldolase family. Type 3B subfamily.

It is found in the cytoplasm. It catalyses the reaction D-sedoheptulose 7-phosphate + D-glyceraldehyde 3-phosphate = D-erythrose 4-phosphate + beta-D-fructose 6-phosphate. Its pathway is carbohydrate degradation; pentose phosphate pathway; D-glyceraldehyde 3-phosphate and beta-D-fructose 6-phosphate from D-ribose 5-phosphate and D-xylulose 5-phosphate (non-oxidative stage): step 2/3. Its function is as follows. Transaldolase is important for the balance of metabolites in the pentose-phosphate pathway. The protein is Probable transaldolase of Dehalococcoides mccartyi (strain ATCC BAA-2266 / KCTC 15142 / 195) (Dehalococcoides ethenogenes (strain 195)).